The primary structure comprises 166 residues: Cofilin-1 (166 aa).

The residue at position 2 (A2) is an N-acetylalanine. S3 and S8 each carry phosphoserine. One can recognise an ADF-H domain in the interval 4–153; sequence GVAVSDGVIK…KDRCTLAEKL (150 aa). Residue K13 is modified to N6-acetyllysine. T25 bears the Phosphothreonine mark. The short motif at 30 to 34 is the Nuclear localization signal element; the sequence is KKRKK. S41 is subject to Phosphoserine. T63 is subject to Phosphothreonine. At Y68 the chain carries Phosphotyrosine. Position 73 is an N6-acetyllysine (K73). Y82 is modified (phosphotyrosine). K132 participates in a covalent cross-link: Glycyl lysine isopeptide (Lys-Gly) (interchain with G-Cter in SUMO2). Y140 bears the Phosphotyrosine mark. K144 is subject to N6-acetyllysine. Phosphoserine is present on S156.

This sequence belongs to the actin-binding proteins ADF family. Can bind G- and F-actin in a 1:1 ratio of cofilin to actin. It is a major component of intranuclear and cytoplasmic actin rods. Interacts with the subcortical maternal complex (SCMC) via interaction with TLE6 and NLRP5. Interacts with C9orf72. Post-translationally, inactivated by phosphorylation on Ser-3. Phosphorylated on Ser-3 in resting cells. Dephosphorylated by PDXP/chronophin; this restores its activity in promoting actin filament depolymerization. The phosphorylation of Ser-24 may prevent recognition of the nuclear localization signal. Phosphorylated via a ARRB1-RAC1-LIMK1-PAK1 cascade upon active ligand stimulation of atypical chemokine receptor ACKR2. As to expression, widely distributed in various tissues. Not found in skeletal muscle.

The protein localises to the nucleus matrix. It is found in the cytoplasm. The protein resides in the cytoskeleton. Its subcellular location is the cell projection. It localises to the ruffle membrane. The protein localises to the lamellipodium membrane. It is found in the lamellipodium. The protein resides in the growth cone. Its subcellular location is the axon. Its function is as follows. Binds to F-actin and exhibits pH-sensitive F-actin depolymerizing activity. In conjunction with the subcortical maternal complex (SCMC), plays an essential role for zygotes to progress beyond the first embryonic cell divisions via regulation of actin dynamics. Required for the centralization of the mitotic spindle and symmetric division of zygotes. Plays a role in the regulation of cell morphology and cytoskeletal organization in epithelial cells. Required for the up-regulation of atypical chemokine receptor ACKR2 from endosomal compartment to cell membrane, increasing its efficiency in chemokine uptake and degradation. Required for neural tube morphogenesis and neural crest cell migration. This chain is Cofilin-1 (Cfl1), found in Mus musculus (Mouse).